Consider the following 1245-residue polypeptide: ATP-dependent helicase/nuclease subunit A (1245 aa).

Residues 4 to 477 (TKWTDEQLSA…IQLYKNFRSR (474 aa)) enclose the UvrD-like helicase ATP-binding domain. 25–32 (AAAGSGKT) is a binding site for ATP. Residues 517–815 (KFKDTIVGGP…RIMSIHKSKG (299 aa)) form the UvrD-like helicase C-terminal domain.

Belongs to the helicase family. AddA subfamily. In terms of assembly, heterodimer of AddA and AddB/RexB. Mg(2+) is required as a cofactor.

The catalysed reaction is Couples ATP hydrolysis with the unwinding of duplex DNA by translocating in the 3'-5' direction.. It carries out the reaction ATP + H2O = ADP + phosphate + H(+). The heterodimer acts as both an ATP-dependent DNA helicase and an ATP-dependent, dual-direction single-stranded exonuclease. Recognizes the chi site generating a DNA molecule suitable for the initiation of homologous recombination. The AddA nuclease domain is required for chi fragment generation; this subunit has the helicase and 3' -&gt; 5' nuclease activities. This chain is ATP-dependent helicase/nuclease subunit A, found in Clostridium beijerinckii (strain ATCC 51743 / NCIMB 8052) (Clostridium acetobutylicum).